Reading from the N-terminus, the 301-residue chain is MKIGILSQNETLYSTRRLREACEARGHEAVIINALRCYMNINSVQPSIHFEGNDLTGFDAIIPRIGADITFYGCSVLRQFEMMDVFSVNQSIAISRSRDKLRSLQLLSRKGVGMPITGFASKPDDVPDLIKMVGGAPLVIKLLEGTQGIGVVLAETQTAAESVIEAFMGLKANIMVQEYIKEAGGADIRCFVIGDKVIATMKRQAADGEFRSNLHRGGSASLVRITPEERKTAVAAAKAMGLSVAGVDLLRSERGPLIMEVNSSPGLEGIEAATEKDIAGMIIEYIEKNAAKKNRRHLQYQ.

The ATP-grasp domain occupies 104-287 (LQLLSRKGVG…IAGMIIEYIE (184 aa)). ATP-binding positions include Lys141, 178 to 179 (EY), Asp187, and 211 to 213 (RSN). 3 residues coordinate Mg(2+): Asp248, Glu260, and Asn262. Mn(2+) contacts are provided by Asp248, Glu260, and Asn262.

This sequence belongs to the RimK family. The cofactor is Mg(2+). Requires Mn(2+) as cofactor.

This is Probable alpha-L-glutamate ligase from Photobacterium profundum (strain SS9).